Reading from the N-terminus, the 118-residue chain is Basic phospholipase A2 nigexine (118 aa).

7 cysteine pairs are disulfide-bonded: C11–C70, C26–C117, C28–C44, C43–C98, C50–C91, C59–C84, and C77–C89. The Ca(2+) site is built by Y27, G29, and G31. Residue H47 is part of the active site. D48 contacts Ca(2+). Residues 52–69 (EKAGKMGCWPYFTLYKYK) carry the Coagulation factor Xa binding motif motif. D92 is a catalytic residue.

The protein belongs to the phospholipase A2 family. Group I subfamily. D49 sub-subfamily. Ca(2+) is required as a cofactor. As to expression, expressed by the venom gland.

The protein resides in the secreted. The catalysed reaction is a 1,2-diacyl-sn-glycero-3-phosphocholine + H2O = a 1-acyl-sn-glycero-3-phosphocholine + a fatty acid + H(+). Snake venom phospholipase A2 (PLA2) that shows anticoagulant activity, has cytotoxic activity and affects neuromuscular transmission in vitro. PLA2 catalyzes the calcium-dependent hydrolysis of the 2-acyl groups in 3-sn-phosphoglycerides. This chain is Basic phospholipase A2 nigexine, found in Naja pallida (Red spitting cobra).